A 488-amino-acid polypeptide reads, in one-letter code: Probable malate:quinone oxidoreductase (488 aa).

This sequence belongs to the MQO family. FAD serves as cofactor.

The catalysed reaction is (S)-malate + a quinone = a quinol + oxaloacetate. Its pathway is carbohydrate metabolism; tricarboxylic acid cycle; oxaloacetate from (S)-malate (quinone route): step 1/1. The chain is Probable malate:quinone oxidoreductase from Neisseria meningitidis serogroup C (strain 053442).